The following is a 308-amino-acid chain: 4-diphosphocytidyl-2-C-methyl-D-erythritol kinase (308 aa).

Lysine 24 is a catalytic residue. Residue 118-128 (PVGAGMAGGSA) participates in ATP binding. Residue aspartate 160 is part of the active site.

It belongs to the GHMP kinase family. IspE subfamily.

The catalysed reaction is 4-CDP-2-C-methyl-D-erythritol + ATP = 4-CDP-2-C-methyl-D-erythritol 2-phosphate + ADP + H(+). It functions in the pathway isoprenoid biosynthesis; isopentenyl diphosphate biosynthesis via DXP pathway; isopentenyl diphosphate from 1-deoxy-D-xylulose 5-phosphate: step 3/6. Functionally, catalyzes the phosphorylation of the position 2 hydroxy group of 4-diphosphocytidyl-2C-methyl-D-erythritol. This Bifidobacterium adolescentis (strain ATCC 15703 / DSM 20083 / NCTC 11814 / E194a) protein is 4-diphosphocytidyl-2-C-methyl-D-erythritol kinase.